We begin with the raw amino-acid sequence, 513 residues long: RNA-splicing ligase RtcB homolog (513 aa).

The Mn(2+) site is built by aspartate 127, cysteine 130, histidine 235, histidine 267, and histidine 361. 234–238 (NHYAE) lines the GMP pocket. GMP contacts are provided by residues 361-362 (HN), 410-413 (GGTM), serine 417, 436-439 (HGAG), and lysine 512. The active-site GMP-histidine intermediate is the histidine 436.

This sequence belongs to the RtcB family. As to quaternary structure, catalytic component of the tRNA-splicing ligase complex. Mn(2+) is required as a cofactor.

The catalysed reaction is a 3'-end 3'-phospho-ribonucleotide-RNA + a 5'-end dephospho-ribonucleoside-RNA + GTP = a ribonucleotidyl-ribonucleotide-RNA + GMP + diphosphate. It catalyses the reaction a 3'-end 2',3'-cyclophospho-ribonucleotide-RNA + a 5'-end dephospho-ribonucleoside-RNA + GTP + H2O = a ribonucleotidyl-ribonucleotide-RNA + GMP + diphosphate + H(+). Catalytic subunit of the tRNA-splicing ligase complex that acts by directly joining spliced tRNA halves to mature-sized tRNAs by incorporating the precursor-derived splice junction phosphate into the mature tRNA as a canonical 3',5'-phosphodiester. May act as an RNA ligase with broad substrate specificity, and may function toward other RNAs. This Micromonas commoda (strain RCC299 / NOUM17 / CCMP2709) (Picoplanktonic green alga) protein is RNA-splicing ligase RtcB homolog.